The following is a 427-amino-acid chain: Peptidase B (427 aa).

Mn(2+)-binding residues include K195 and D200. The active site involves K207. D218, D277, and E279 together coordinate Mn(2+). R281 is an active-site residue.

It belongs to the peptidase M17 family. Homohexamer. The cofactor is Mn(2+).

Its subcellular location is the cytoplasm. It catalyses the reaction Release of an N-terminal amino acid, Xaa, from a peptide or arylamide. Xaa is preferably Glu or Asp but may be other amino acids, including Leu, Met, His, Cys and Gln.. Probably plays an important role in intracellular peptide degradation. The protein is Peptidase B of Escherichia coli O157:H7.